The chain runs to 116 residues: Large ribosomal subunit protein eL22A (116 aa).

This sequence belongs to the eukaryotic ribosomal protein eL22 family.

This chain is Large ribosomal subunit protein eL22A (rpl22), found in Dictyostelium discoideum (Social amoeba).